We begin with the raw amino-acid sequence, 72 residues long: Large ribosomal subunit protein bL31 (72 aa).

Zn(2+) is bound by residues Cys16, Cys18, Cys38, and Cys41.

This sequence belongs to the bacterial ribosomal protein bL31 family. Type A subfamily. In terms of assembly, part of the 50S ribosomal subunit. Zn(2+) serves as cofactor.

Its function is as follows. Binds the 23S rRNA. The protein is Large ribosomal subunit protein bL31 of Beutenbergia cavernae (strain ATCC BAA-8 / DSM 12333 / CCUG 43141 / JCM 11478 / NBRC 16432 / NCIMB 13614 / HKI 0122).